The primary structure comprises 419 residues: Multifunctional CCA protein (419 aa).

ATP contacts are provided by Gly-8 and Arg-11. 2 residues coordinate CTP: Gly-8 and Arg-11. Residues Asp-21 and Asp-23 each coordinate Mg(2+). ATP is bound by residues Arg-91, Arg-137, and Arg-140. CTP contacts are provided by Arg-91, Arg-137, and Arg-140. The 107-residue stretch at 228 to 334 (SFLHTMLVLQ…IKLFNKLDVW (107 aa)) folds into the HD domain.

It belongs to the tRNA nucleotidyltransferase/poly(A) polymerase family. Bacterial CCA-adding enzyme type 1 subfamily. Monomer. Can also form homodimers and oligomers. It depends on Mg(2+) as a cofactor. Ni(2+) is required as a cofactor.

It catalyses the reaction a tRNA precursor + 2 CTP + ATP = a tRNA with a 3' CCA end + 3 diphosphate. It carries out the reaction a tRNA with a 3' CCA end + 2 CTP + ATP = a tRNA with a 3' CCACCA end + 3 diphosphate. Functionally, catalyzes the addition and repair of the essential 3'-terminal CCA sequence in tRNAs without using a nucleic acid template. Adds these three nucleotides in the order of C, C, and A to the tRNA nucleotide-73, using CTP and ATP as substrates and producing inorganic pyrophosphate. tRNA 3'-terminal CCA addition is required both for tRNA processing and repair. Also involved in tRNA surveillance by mediating tandem CCA addition to generate a CCACCA at the 3' terminus of unstable tRNAs. While stable tRNAs receive only 3'-terminal CCA, unstable tRNAs are marked with CCACCA and rapidly degraded. This is Multifunctional CCA protein from Mannheimia succiniciproducens (strain KCTC 0769BP / MBEL55E).